A 419-amino-acid chain; its full sequence is Arginine biosynthesis bifunctional protein ArgJ 1, mitochondrial (419 aa).

Substrate-binding residues include Lys-177, Thr-188, Glu-275, Asn-414, and Thr-419. Thr-188 serves as the catalytic Nucleophile.

It belongs to the ArgJ family. In terms of assembly, heterodimer of an alpha and a beta chain. In terms of processing, the alpha and beta chains are autoproteolytically processed from a single precursor protein within the mitochondrion.

The protein localises to the mitochondrion matrix. It catalyses the reaction N(2)-acetyl-L-ornithine + L-glutamate = N-acetyl-L-glutamate + L-ornithine. The enzyme catalyses L-glutamate + acetyl-CoA = N-acetyl-L-glutamate + CoA + H(+). Its pathway is amino-acid biosynthesis; L-arginine biosynthesis; L-ornithine and N-acetyl-L-glutamate from L-glutamate and N(2)-acetyl-L-ornithine (cyclic): step 1/1. It participates in amino-acid biosynthesis; L-arginine biosynthesis; N(2)-acetyl-L-ornithine from L-glutamate: step 1/4. Functionally, catalyzes two activities which are involved in the cyclic version of arginine biosynthesis: the synthesis of acetylglutamate from glutamate and acetyl-CoA, and of ornithine by transacetylation between acetylornithine and glutamate. This chain is Arginine biosynthesis bifunctional protein ArgJ 1, mitochondrial, found in Sclerotinia sclerotiorum (strain ATCC 18683 / 1980 / Ss-1) (White mold).